The chain runs to 306 residues: Probable cobalamin biosynthesis protein CobD (306 aa).

A run of 5 helical transmembrane segments spans residues 54–74 (LFGFLNVVLVLAIVFFMAFEI), 88–108 (ISLYSIILSFSIGHKSLIEFS), 155–175 (ITDSIIAPLIYAAIFGLPGAF), 207–227 (ILNFIPSRIAGMLLIISAPFY), and 286–306 (SLKAVDYSVLLFLIIYMILFM).

It belongs to the CobD/CbiB family.

It localises to the cell membrane. It functions in the pathway cofactor biosynthesis; adenosylcobalamin biosynthesis. Its function is as follows. Converts cobyric acid to cobinamide by the addition of aminopropanol on the F carboxylic group. This is Probable cobalamin biosynthesis protein CobD from Methanococcus maripaludis (strain DSM 14266 / JCM 13030 / NBRC 101832 / S2 / LL).